We begin with the raw amino-acid sequence, 269 residues long: Energy-coupling factor transporter ATP-binding protein EcfA1 (269 aa).

The ABC transporter domain occupies 8 to 242 (IVFKNVSFQY…AEELTRIGLD (235 aa)). ATP is bound at residue 42 to 49 (GHNGSGKS).

The protein belongs to the ABC transporter superfamily. Energy-coupling factor EcfA family. Forms a stable energy-coupling factor (ECF) transporter complex composed of 2 membrane-embedded substrate-binding proteins (S component), 2 ATP-binding proteins (A component) and 2 transmembrane proteins (T component).

Its subcellular location is the cell membrane. In terms of biological role, ATP-binding (A) component of a common energy-coupling factor (ECF) ABC-transporter complex. Unlike classic ABC transporters this ECF transporter provides the energy necessary to transport a number of different substrates. The sequence is that of Energy-coupling factor transporter ATP-binding protein EcfA1 from Staphylococcus aureus (strain Mu50 / ATCC 700699).